A 329-amino-acid chain; its full sequence is 36 kDa antigen (329 aa).

A helical membrane pass occupies residues 11-31; the sequence is AILTGGGALLLGLIVLFYLAY.

Belongs to the membrane fusion protein (MFP) (TC 8.A.1) family.

It localises to the membrane. This is 36 kDa antigen from Helicobacter pylori (strain ATCC 700392 / 26695) (Campylobacter pylori).